We begin with the raw amino-acid sequence, 516 residues long: GMP synthase [glutamine-hydrolyzing] (516 aa).

A Glutamine amidotransferase type-1 domain is found at 8–198 (KILILDFGSQ…VVNICGCDTL (191 aa)). Catalysis depends on C84, which acts as the Nucleophile. Residues H172 and E174 contribute to the active site. Residues 199-391 (WNIENIIEND…LGLPYNMLYR (193 aa)) form the GMPS ATP-PPase domain. ATP is bound at residue 226-232 (SGGVDSS).

In terms of assembly, homodimer.

It carries out the reaction XMP + L-glutamine + ATP + H2O = GMP + L-glutamate + AMP + diphosphate + 2 H(+). It functions in the pathway purine metabolism; GMP biosynthesis; GMP from XMP (L-Gln route): step 1/1. Functionally, catalyzes the synthesis of GMP from XMP. The chain is GMP synthase [glutamine-hydrolyzing] from Francisella tularensis subsp. tularensis (strain WY96-3418).